The chain runs to 109 residues: Small ribosomal subunit protein uS17 (109 aa).

Belongs to the universal ribosomal protein uS17 family. As to quaternary structure, part of the 30S ribosomal subunit.

Functionally, one of the primary rRNA binding proteins, it binds specifically to the 5'-end of 16S ribosomal RNA. This chain is Small ribosomal subunit protein uS17, found in Thermoplasma volcanium (strain ATCC 51530 / DSM 4299 / JCM 9571 / NBRC 15438 / GSS1).